A 306-amino-acid polypeptide reads, in one-letter code: Nucleotide-binding protein RSal33209_2275 (306 aa).

ATP is bound at residue 29 to 36; the sequence is GMSGAGRS. Residue 80-83 participates in GTP binding; sequence DVRG.

Belongs to the RapZ-like family.

Functionally, displays ATPase and GTPase activities. This Renibacterium salmoninarum (strain ATCC 33209 / DSM 20767 / JCM 11484 / NBRC 15589 / NCIMB 2235) protein is Nucleotide-binding protein RSal33209_2275.